The chain runs to 63 residues: 2-hydroxymuconate tautomerase (63 aa).

P2 (proton acceptor; via imino nitrogen) is an active-site residue.

It belongs to the 4-oxalocrotonate tautomerase family. As to quaternary structure, homohexamer.

It catalyses the reaction (2Z,4E)-2-hydroxyhexa-2,4-dienedioate = (3E)-2-oxohex-3-enedioate. It participates in xenobiotic degradation; toluene degradation. It functions in the pathway xenobiotic degradation; xylene degradation. Functionally, catalyzes the ketonization of 2-hydroxymuconate stereoselectively to yield 2-oxo-3-hexenedioate. The sequence is that of 2-hydroxymuconate tautomerase (xylH) from Pseudomonas putida (Arthrobacter siderocapsulatus).